Here is a 147-residue protein sequence, read N- to C-terminus: Small ribosomal subunit protein bS16 (147 aa).

The interval 89-147 (AWTHGNNPKKAEPGKKAQERAKERADKAEAKAAAAAEAAAAPAEEAPAEAAPAEETSES) is disordered. Residues 97–118 (KKAEPGKKAQERAKERADKAEA) are compositionally biased toward basic and acidic residues. Over residues 119 to 147 (KAAAAAEAAAAPAEEAPAEAAPAEETSES) the composition is skewed to low complexity.

Belongs to the bacterial ribosomal protein bS16 family.

The chain is Small ribosomal subunit protein bS16 from Hyphomonas neptunium (strain ATCC 15444).